The primary structure comprises 631 residues: DNA mismatch repair protein MutL (631 aa).

The disordered stretch occupies residues 389-423; it reads GEREASRQAGGQRVQETQMSSYGSGQSGGRGRSYA.

Belongs to the DNA mismatch repair MutL/HexB family.

Functionally, this protein is involved in the repair of mismatches in DNA. It is required for dam-dependent methyl-directed DNA mismatch repair. May act as a 'molecular matchmaker', a protein that promotes the formation of a stable complex between two or more DNA-binding proteins in an ATP-dependent manner without itself being part of a final effector complex. The polypeptide is DNA mismatch repair protein MutL (Shewanella loihica (strain ATCC BAA-1088 / PV-4)).